Consider the following 329-residue polypeptide: 4-hydroxy-3-methylbut-2-enyl diphosphate reductase (329 aa).

C27 lines the [4Fe-4S] cluster pocket. (2E)-4-hydroxy-3-methylbut-2-enyl diphosphate contacts are provided by H56 and H89. 2 residues coordinate dimethylallyl diphosphate: H56 and H89. Isopentenyl diphosphate-binding residues include H56 and H89. C111 lines the [4Fe-4S] cluster pocket. Residue H139 coordinates (2E)-4-hydroxy-3-methylbut-2-enyl diphosphate. Residue H139 participates in dimethylallyl diphosphate binding. H139 provides a ligand contact to isopentenyl diphosphate. The Proton donor role is filled by E141. Position 179 (T179) interacts with (2E)-4-hydroxy-3-methylbut-2-enyl diphosphate. Residue C209 coordinates [4Fe-4S] cluster. Residues S237, S238, N239, and S281 each coordinate (2E)-4-hydroxy-3-methylbut-2-enyl diphosphate. Residues S237, S238, N239, and S281 each coordinate dimethylallyl diphosphate. Residues S237, S238, N239, and S281 each coordinate isopentenyl diphosphate.

This sequence belongs to the IspH family. Requires [4Fe-4S] cluster as cofactor.

The enzyme catalyses isopentenyl diphosphate + 2 oxidized [2Fe-2S]-[ferredoxin] + H2O = (2E)-4-hydroxy-3-methylbut-2-enyl diphosphate + 2 reduced [2Fe-2S]-[ferredoxin] + 2 H(+). It catalyses the reaction dimethylallyl diphosphate + 2 oxidized [2Fe-2S]-[ferredoxin] + H2O = (2E)-4-hydroxy-3-methylbut-2-enyl diphosphate + 2 reduced [2Fe-2S]-[ferredoxin] + 2 H(+). It participates in isoprenoid biosynthesis; dimethylallyl diphosphate biosynthesis; dimethylallyl diphosphate from (2E)-4-hydroxy-3-methylbutenyl diphosphate: step 1/1. It functions in the pathway isoprenoid biosynthesis; isopentenyl diphosphate biosynthesis via DXP pathway; isopentenyl diphosphate from 1-deoxy-D-xylulose 5-phosphate: step 6/6. Functionally, catalyzes the conversion of 1-hydroxy-2-methyl-2-(E)-butenyl 4-diphosphate (HMBPP) into a mixture of isopentenyl diphosphate (IPP) and dimethylallyl diphosphate (DMAPP). Acts in the terminal step of the DOXP/MEP pathway for isoprenoid precursor biosynthesis. The protein is 4-hydroxy-3-methylbut-2-enyl diphosphate reductase of Methylibium petroleiphilum (strain ATCC BAA-1232 / LMG 22953 / PM1).